Reading from the N-terminus, the 20-residue chain is NLLQFGYMIRCANGRSRPVW.

As to quaternary structure, heterotrimer of alpha, beta, and gamma chains; non-covalently linked. Requires Ca(2+) as cofactor. Expressed by the venom gland.

Its subcellular location is the secreted. It catalyses the reaction a 1,2-diacyl-sn-glycero-3-phosphocholine + H2O = a 1-acyl-sn-glycero-3-phosphocholine + a fatty acid + H(+). Functionally, heterotrimer: Snake venom phospholipase A2 (PLA2) heterotrimer that acts as a potent presynaptic neurotoxin by blocking synaptic transmission and synaptic vesicle recycling. Enzymatic activity is essential for the neurotoxic effects. May act by binding in a calcium-dependent fashion to neurotonal pentraxin-1 (NPTX1) and neurotonal pentraxin-2 (NPTX2), but not to neuronal pentraxin receptor (NPTXR). Also binds to taipoxin-associated calcium binding protein 49 (RCN2), a protein localized in the lumen of endoplasmic reticulum. Monomer (alpha chain): Snake venom phospholipase A2 (PLA2) that possesses a low level of presynaptic activity and the same high enzymatic activity than the heterotrimer. PLA2 catalyzes the calcium-dependent hydrolysis of the 2-acyl groups in 3-sn-phosphoglycerides. The polypeptide is Basic phospholipase A2 cannitoxin alpha chain (Oxyuranus scutellatus canni (Papuan taipan)).